A 199-amino-acid polypeptide reads, in one-letter code: Zinc finger matrin-type protein 2 (199 aa).

Residue Ala2 is modified to N-acetylalanine. Residues Lys8, Lys36, Lys39, Lys45, Lys55, Lys61, Lys64, Lys70, Lys102, and Lys123 each participate in a glycyl lysine isopeptide (Lys-Gly) (interchain with G-Cter in SUMO2) cross-link. Positions 27–46 (KRLTEEREKKDGKPVQPVKR) are disordered. The segment at 80–104 (YYCNVCDCVVKDSINFLDHINGKKH) adopts a Matrin-type zinc-finger fold. Positions 150–173 (REEEEKAKAYKKEKQKEKKRRAEE) are enriched in basic and acidic residues. Residues 150 to 175 (REEEEKAKAYKKEKQKEKKRRAEEDL) form a disordered region.

As to quaternary structure, component of the spliceosome B complex.

It is found in the nucleus. Its function is as follows. Involved in pre-mRNA splicing as a component of the spliceosome. The chain is Zinc finger matrin-type protein 2 (ZMAT2) from Homo sapiens (Human).